Reading from the N-terminus, the 270-residue chain is MLRKVFYISDGTAITAEVFGHAVLSQFPLEFDALTIPFVETEKKAEAVKAQINDCFITTGERPLVFHSIVKAEIRDIIYSSEGLDYDFLNTFVAPLEKQLGMPATPALHRTHGKTNDSYEARIEAINYAMENDDGQTMKHMDKADLILLGVSRCGKTPSSLYLSMQFGIKAANYPFTEDDMDNLKLPDALKRNKDKLFGLTIDPVRLHEIRQSRMSNSRYSSMRQCRMEVKEVEMMYKRERIPFVNTTNHSVEEIATKILEATSLERHMF.

150–157 (GVSRCGKT) is a binding site for ADP.

Belongs to the pyruvate, phosphate/water dikinase regulatory protein family. PSRP subfamily.

The catalysed reaction is [pyruvate, water dikinase] + ADP = [pyruvate, water dikinase]-phosphate + AMP + H(+). The enzyme catalyses [pyruvate, water dikinase]-phosphate + phosphate + H(+) = [pyruvate, water dikinase] + diphosphate. Functionally, bifunctional serine/threonine kinase and phosphorylase involved in the regulation of the phosphoenolpyruvate synthase (PEPS) by catalyzing its phosphorylation/dephosphorylation. This is Putative phosphoenolpyruvate synthase regulatory protein from Shewanella piezotolerans (strain WP3 / JCM 13877).